Here is a 418-residue protein sequence, read N- to C-terminus: MRPKSWGWISMSERLEGKRVRIKAKGKIFEGIVMPSFTGNFVLKLDNGYNVGFKEYELLEVLEVEPFEPHLPELVKREGLPDVKIISTGGTIASKVDYRTGAVTSQFTAEEIASEVPELTEICNVDAELLYNILSENMKPENWIELARHVYKALKDHEGVIITHGTDTMHFSAAALSFMLSTPKPVVFVGAQRSSDRPSSDAAMNLLCAAKAATEDIGEVVVCMHGSTSDDYCLVHRGVKVRKNHTSRRDAFQSVNAKPIGRIDYPSLSVEWLSWRYRRGERELKLTDRLERKVVLIKFFPGLSSDILEYYHSKGYRGFVIEGTGLGHVSTDWIDTLRRVCEDSVVVMTSQCLWGRVCDRVYDTGRDILRAGVIEGEDMLPEVALIKLMWLLGNYSIEEAKEMVKKSVAGEIEPTTQY.

Residues 81–407 (PDVKIISTGG…EEAKEMVKKS (327 aa)) enclose the Asparaginase/glutaminase domain. Catalysis depends on residues Thr-91, Thr-166, Asp-167, and Lys-243.

It belongs to the asparaginase 1 family. GatD subfamily. As to quaternary structure, heterodimer of GatD and GatE.

The catalysed reaction is L-glutamyl-tRNA(Gln) + L-glutamine + ATP + H2O = L-glutaminyl-tRNA(Gln) + L-glutamate + ADP + phosphate + H(+). Functionally, allows the formation of correctly charged Gln-tRNA(Gln) through the transamidation of misacylated Glu-tRNA(Gln) in organisms which lack glutaminyl-tRNA synthetase. The reaction takes place in the presence of glutamine and ATP through an activated gamma-phospho-Glu-tRNA(Gln). The GatDE system is specific for glutamate and does not act on aspartate. This chain is Glutamyl-tRNA(Gln) amidotransferase subunit D, found in Archaeoglobus fulgidus (strain ATCC 49558 / DSM 4304 / JCM 9628 / NBRC 100126 / VC-16).